A 537-amino-acid polypeptide reads, in one-letter code: Atrial natriuretic peptide receptor 3 (537 aa).

The signal sequence occupies residues 1-20; the sequence is MPSLLVLTFSACVLLGWALL. Positions 21–41 are excised as a propeptide; the sequence is ADCTGGGGSGGAGPGRGRRER. The Extracellular portion of the chain corresponds to 42 to 477; that stretch reads EALPPQKIEV…PCKASGGLEE (436 aa). The N-linked (GlcNAc...) asparagine glycan is linked to Asn82. Disulfide bonds link Cys104-Cys132 and Cys209-Cys257. 2 N-linked (GlcNAc...) asparagine glycosylation sites follow: Asn289 and Asn390. The chain crosses the membrane as a helical span at residues 478-500; it reads SAVTGIVVGALLGAGLLMAFYFF. At 501–537 the chain is on the cytoplasmic side; that stretch reads RKKYRITIERRNQQEESNVGKHRELREDSIRSHFSVA.

Belongs to the ANF receptor family. In terms of assembly, homodimer; disulfide-linked. Interacts with OSTN.

It localises to the cell membrane. Functionally, receptor for the natriuretic peptide hormones, binding with similar affinities atrial natriuretic peptide NPPA/ANP, brain natriuretic peptide NPPB/BNP, and C-type natriuretic peptide NPPC/CNP. May function as a clearance receptor for NPPA, NPPB and NPPC, regulating their local concentrations and effects. Acts as a regulator of osteoblast differentiation and bone growth by binding to its ligand osteocrin, thereby preventing binding between NPR3/NPR-C and natriuretic peptides, leading to increase cGMP production. This is Atrial natriuretic peptide receptor 3 (NPR3) from Bos taurus (Bovine).